Reading from the N-terminus, the 380-residue chain is MDFNLNDEQELFVAGIRELMASENWEAYFAECDRDSVYPERFVKALADMGIDSLLIPEEHGGLEAGFVTVAAVWMELGRLGAPTYVLYQLPGGFNTFLREGTQEQIDKIMAFRGTGKQMWNSAITEPGAGSDVGSLKTTYTRKNGKVYLNGSKCFITSSAYTPYIVVMARDGASPDKPVYTEWFVDMSKAGIKVNKLEKLGLRMDSCCEITFDDVELDEKDMFGREGNGFNRVKEEFDHERFLVALTNYGTAMCAFEDAARYANQRVQFGEAIGRFQLIQEKFAHMAIKLNSMKNMLLEAAWKADNGTITSGDAAMCKYFCANAAFEVVDTAMQVLGGVGIAGNHRITRFWRDLRVDRVSGGSDEMQILTLGRAVLKQYR.

The protein belongs to the acyl-CoA dehydrogenase family. In terms of assembly, homotetramer. It depends on FAD as a cofactor.

The protein resides in the cytoplasm. It catalyses the reaction 4-(trimethylamino)butanoyl-CoA + oxidized [electron-transfer flavoprotein] + H(+) = crotonobetainyl-CoA + reduced [electron-transfer flavoprotein]. It functions in the pathway amine and polyamine metabolism; carnitine metabolism. Functionally, catalyzes the reduction of crotonobetainyl-CoA to gamma-butyrobetainyl-CoA. The chain is Crotonobetainyl-CoA reductase from Salmonella agona (strain SL483).